Here is a 353-residue protein sequence, read N- to C-terminus: MFTLSDFDFNLPPELIAQTALPERTASRLLEVDGTVAPARLVDRRFAELPSCIARGDLLVFNDTKVLKARFFGQKASGGKIEVLVERVTGTHTALAQIRASKSPGAGTTLRLADAFDVTVGERVEPFFTLHFPQPCLTLIEQYGRLPLPPYIEHDADATDETRYQTVYASNPGAVAAPTAGLHFDQPLLEKLDAMGVERATLTLHVGAGTFQPVRVENIAEHRMHSEWYDLPQSLVDKIAATRARGGNVIAVGTTSMRALEAAARSAEAAGRPLAATQDETDIFITPGYRFRVVDRLVTNFHLPKSTLLMLVSAFAGVETIRAAYRHAIDERYRFFSYGDAMLLTRRDTPEHA.

This sequence belongs to the QueA family. In terms of assembly, monomer.

Its subcellular location is the cytoplasm. The enzyme catalyses 7-aminomethyl-7-carbaguanosine(34) in tRNA + S-adenosyl-L-methionine = epoxyqueuosine(34) in tRNA + adenine + L-methionine + 2 H(+). It functions in the pathway tRNA modification; tRNA-queuosine biosynthesis. Functionally, transfers and isomerizes the ribose moiety from AdoMet to the 7-aminomethyl group of 7-deazaguanine (preQ1-tRNA) to give epoxyqueuosine (oQ-tRNA). This chain is S-adenosylmethionine:tRNA ribosyltransferase-isomerase, found in Burkholderia vietnamiensis (strain G4 / LMG 22486) (Burkholderia cepacia (strain R1808)).